The following is a 483-amino-acid chain: Alginate biosynthesis protein AlgA (483 aa).

Belongs to the mannose-6-phosphate isomerase type 2 family. Monomer. Requires Co(2+) as cofactor.

It catalyses the reaction D-mannose 6-phosphate = D-fructose 6-phosphate. It carries out the reaction alpha-D-mannose 1-phosphate + GTP + H(+) = GDP-alpha-D-mannose + diphosphate. Its pathway is nucleotide-sugar biosynthesis; GDP-alpha-D-mannose biosynthesis; GDP-alpha-D-mannose from alpha-D-mannose 1-phosphate (GTP route): step 1/1. It participates in nucleotide-sugar biosynthesis; GDP-alpha-D-mannose biosynthesis; alpha-D-mannose 1-phosphate from D-fructose 6-phosphate: step 1/2. Functionally, produces a precursor for alginate polymerization. The alginate layer provides a protective barrier against host immune defenses and antibiotics. This Pseudomonas fluorescens protein is Alginate biosynthesis protein AlgA (algA).